Consider the following 353-residue polypeptide: Photosystem II D2 protein (353 aa).

Thr2 carries the post-translational modification N-acetylthreonine. Thr2 carries the phosphothreonine modification. Residues 41 to 61 (CAYFALGGWFTGTTFVTSWYT) traverse the membrane as a helical segment. Residue His118 participates in chlorophyll a binding. Residues 125–141 (GFMLRQFELARSVQLRP) traverse the membrane as a helical segment. Pheophytin a contacts are provided by Gln130 and Asn143. The chain crosses the membrane as a helical span at residues 153–166 (VFVSVFLIYPLGQS). Position 198 (His198) interacts with chlorophyll a. The helical transmembrane segment at 208 to 228 (AALLCAIHGATVENTLFEDGD) threads the bilayer. Residues His215 and Phe262 each contribute to the a plastoquinone site. His215 is a Fe cation binding site. His269 is a binding site for Fe cation. Residues 279–295 (GLWMSAIGVVGLALNLR) traverse the membrane as a helical segment.

Belongs to the reaction center PufL/M/PsbA/D family. As to quaternary structure, PSII is composed of 1 copy each of membrane proteins PsbA, PsbB, PsbC, PsbD, PsbE, PsbF, PsbH, PsbI, PsbJ, PsbK, PsbL, PsbM, PsbT, PsbX, PsbY, PsbZ, Psb30/Ycf12, at least 3 peripheral proteins of the oxygen-evolving complex and a large number of cofactors. It forms dimeric complexes. The cofactor is The D1/D2 heterodimer binds P680, chlorophylls that are the primary electron donor of PSII, and subsequent electron acceptors. It shares a non-heme iron and each subunit binds pheophytin, quinone, additional chlorophylls, carotenoids and lipids. There is also a Cl(-1) ion associated with D1 and D2, which is required for oxygen evolution. The PSII complex binds additional chlorophylls, carotenoids and specific lipids..

The protein localises to the plastid. It localises to the chloroplast thylakoid membrane. The catalysed reaction is 2 a plastoquinone + 4 hnu + 2 H2O = 2 a plastoquinol + O2. Photosystem II (PSII) is a light-driven water:plastoquinone oxidoreductase that uses light energy to abstract electrons from H(2)O, generating O(2) and a proton gradient subsequently used for ATP formation. It consists of a core antenna complex that captures photons, and an electron transfer chain that converts photonic excitation into a charge separation. The D1/D2 (PsbA/PsbD) reaction center heterodimer binds P680, the primary electron donor of PSII as well as several subsequent electron acceptors. D2 is needed for assembly of a stable PSII complex. The protein is Photosystem II D2 protein of Pinus thunbergii (Japanese black pine).